Consider the following 1024-residue polypeptide: SWI/SNF-related matrix-associated actin-dependent regulator of chromatin subfamily A containing DEAD/H box 1 (1024 aa).

Met-1 carries the post-translational modification N-acetylmethionine. Residues Met-1–Phe-83 are disordered. The span at Asp-7–Glu-19 shows a compositional bias: basic and acidic residues. At Thr-54 the chain carries Phosphothreonine. The residue at position 57 (Ser-57) is a Phosphoserine. A Glycyl lysine isopeptide (Lys-Gly) (interchain with G-Cter in SUMO2) cross-link involves residue Lys-77. Residues Ser-79, Ser-124, Ser-127, Ser-132, Ser-145, and Ser-151 each carry the phosphoserine modification. Residues Leu-156–Gly-198 form the CUE 1 domain. A disordered region spans residues Gly-201 to Lys-250. Phosphoserine occurs at positions 210 and 213. A Phosphotyrosine modification is found at Tyr-216. Ser-238 and Ser-241 each carry phosphoserine. The region spanning Lys-250–Glu-293 is the CUE 2 domain. Ser-301 bears the Phosphoserine mark. A disordered region spans residues Ser-331 to Asp-369. Glycyl lysine isopeptide (Lys-Gly) (interchain with G-Cter in SUMO2) cross-links involve residues Lys-333 and Lys-469. A Helicase ATP-binding domain is found at Ala-507 to His-675. Ala-519 to Thr-527 is an ATP binding site. Residues Asp-626–His-629 carry the DEGH box motif. The Nuclear localization signal motif lies at Arg-719 to Ile-736. Lys-722 participates in a covalent cross-link: Glycyl lysine isopeptide (Lys-Gly) (interchain with G-Cter in SUMO2). The Helicase C-terminal domain maps to Thr-856–Gly-1008. Tyr-895–Thr-902 is an ATP binding site. A Glycyl lysine isopeptide (Lys-Gly) (interchain with G-Cter in SUMO2) cross-link involves residue Lys-994. The DEAD box motif lies at Asp-1003–Asp-1006.

Belongs to the SNF2/RAD54 helicase family. In terms of assembly, binds to DNA preferentially in the vicinity of transcriptional start sites. Interacts with MSH2 and TRIM28. Part of a complex composed of TRIM28, HDAC1, HDAC2 and EHMT2. Interacts with PCNA.

The protein localises to the nucleus. It localises to the chromosome. It catalyses the reaction ATP + H2O = ADP + phosphate + H(+). DNA helicase that possesses intrinsic ATP-dependent nucleosome-remodeling activity and is both required for DNA repair and heterochromatin organization. Promotes DNA end resection of double-strand breaks (DSBs) following DNA damage: probably acts by weakening histone DNA interactions in nucleosomes flanking DSBs. Required for the restoration of heterochromatin organization after replication. Acts at replication sites to facilitate the maintenance of heterochromatin by directing H3 and H4 histones deacetylation, H3 'Lys-9' trimethylation (H3K9me3) and restoration of silencing. The protein is SWI/SNF-related matrix-associated actin-dependent regulator of chromatin subfamily A containing DEAD/H box 1 (Smarcad1) of Rattus norvegicus (Rat).